A 363-amino-acid chain; its full sequence is Chorismate synthase (363 aa).

The NADP(+) site is built by R48 and R54. FMN contacts are provided by residues 125–127 (RSS), 238–239 (NA), G278, 293–297 (KPTSS), and R319.

This sequence belongs to the chorismate synthase family. Homotetramer. FMNH2 is required as a cofactor.

It carries out the reaction 5-O-(1-carboxyvinyl)-3-phosphoshikimate = chorismate + phosphate. It functions in the pathway metabolic intermediate biosynthesis; chorismate biosynthesis; chorismate from D-erythrose 4-phosphate and phosphoenolpyruvate: step 7/7. Its function is as follows. Catalyzes the anti-1,4-elimination of the C-3 phosphate and the C-6 proR hydrogen from 5-enolpyruvylshikimate-3-phosphate (EPSP) to yield chorismate, which is the branch point compound that serves as the starting substrate for the three terminal pathways of aromatic amino acid biosynthesis. This reaction introduces a second double bond into the aromatic ring system. The protein is Chorismate synthase of Acidithiobacillus ferrooxidans (strain ATCC 23270 / DSM 14882 / CIP 104768 / NCIMB 8455) (Ferrobacillus ferrooxidans (strain ATCC 23270)).